The chain runs to 734 residues: Photosystem I P700 chlorophyll a apoprotein A2 (734 aa).

A run of 8 helical transmembrane segments spans residues 46-69, 135-158, 175-199, 273-291, 330-353, 369-395, 417-439, and 517-535; these read IFSS…FHVA, LYNG…LHLQ, LNHH…HVAI, MAHH…GHMY, LHMQ…QHMY, AALY…IFFI, AIIS…LYIH, and FLVH…LILV. Cysteine 559 and cysteine 568 together coordinate [4Fe-4S] cluster. The next 2 helical transmembrane spans lie at 575 to 596 and 643 to 665; these read AFYL…YWHW and LSVW…MFLI. Histidine 654, methionine 662, and tyrosine 670 together coordinate chlorophyll a. A phylloquinone-binding site is contributed by tryptophan 671. Residues 707-727 form a helical membrane-spanning segment; that stretch reads LVGLVHFSVGYILTYAAFVIA.

This sequence belongs to the PsaA/PsaB family. As to quaternary structure, the PsaA/B heterodimer binds the P700 chlorophyll special pair and subsequent electron acceptors. PSI consists of a core antenna complex that captures photons, and an electron transfer chain that converts photonic excitation into a charge separation. The eukaryotic PSI reaction center is composed of at least 11 subunits. Requires P700 is a chlorophyll a/chlorophyll a' dimer, A0 is one or more chlorophyll a, A1 is one or both phylloquinones and FX is a shared 4Fe-4S iron-sulfur center. as cofactor.

Its subcellular location is the plastid. The protein resides in the chloroplast thylakoid membrane. It catalyses the reaction reduced [plastocyanin] + hnu + oxidized [2Fe-2S]-[ferredoxin] = oxidized [plastocyanin] + reduced [2Fe-2S]-[ferredoxin]. PsaA and PsaB bind P700, the primary electron donor of photosystem I (PSI), as well as the electron acceptors A0, A1 and FX. PSI is a plastocyanin/cytochrome c6-ferredoxin oxidoreductase, converting photonic excitation into a charge separation, which transfers an electron from the donor P700 chlorophyll pair to the spectroscopically characterized acceptors A0, A1, FX, FA and FB in turn. Oxidized P700 is reduced on the lumenal side of the thylakoid membrane by plastocyanin or cytochrome c6. This chain is Photosystem I P700 chlorophyll a apoprotein A2, found in Gracilaria tenuistipitata var. liui (Red alga).